Here is an 87-residue protein sequence, read N- to C-terminus: uncharacterized protein (87 aa).

A helical membrane pass occupies residues 42–62; the sequence is LADALYSAGSAAFTIAASLVA.

Belongs to the SPP1 holin family.

The protein localises to the membrane. This is an uncharacterized protein from Bacillus licheniformis.